Reading from the N-terminus, the 532-residue chain is T-complex protein 1 subunit epsilon (532 aa).

The protein belongs to the TCP-1 chaperonin family. In terms of assembly, component of the T-complex protein 1 (TCP1) complex.

The protein localises to the cytoplasm. Molecular chaperone; assists the folding of proteins upon ATP hydrolysis. This Encephalitozoon cuniculi (strain GB-M1) (Microsporidian parasite) protein is T-complex protein 1 subunit epsilon (CCT5).